Here is a 455-residue protein sequence, read N- to C-terminus: Ectonucleoside triphosphate diphosphohydrolase 6 (455 aa).

The Cytoplasmic segment spans residues 1 to 12 (MRKIPNHGTLRM). Residues 13–32 (TKVAYPLGLCVGLFIYVAYI) form a helical membrane-spanning segment. Over 33–455 (KWHRASAAQA…SLKRQKVPAL (423 aa)) the chain is Lumenal. E196 functions as the Proton acceptor in the catalytic mechanism. 2 disulfide bridges follow: C297/C327 and C387/C401.

It belongs to the GDA1/CD39 NTPase family. It depends on Mg(2+) as a cofactor. The cofactor is Ca(2+). Post-translationally, N-glycosylated.

It is found in the golgi apparatus membrane. The protein localises to the secreted. The protein resides in the cell membrane. It catalyses the reaction a ribonucleoside 5'-diphosphate + H2O = a ribonucleoside 5'-phosphate + phosphate + H(+). It carries out the reaction IDP + H2O = IMP + phosphate + H(+). The catalysed reaction is GDP + H2O = GMP + phosphate + H(+). The enzyme catalyses UDP + H2O = UMP + phosphate + H(+). Its function is as follows. Catalyzes the hydrolysis of nucleoside triphosphates and diphosphates in a calcium- or magnesium-dependent manner. Has a strong preference for nucleoside diphosphates, preferentially hydrolyzes GDP, IDP, and UDP, with slower hydrolysis of CDP, ITP, GTP, CTP, ADP, and UTP and virtually no hydrolysis of ATP. The membrane bound form might support glycosylation reactions in the Golgi apparatus and, when released from cells, might catalyze the hydrolysis of extracellular nucleotides. The chain is Ectonucleoside triphosphate diphosphohydrolase 6 from Mus musculus (Mouse).